The primary structure comprises 370 residues: MSGELEAKSRGDTQSHEQKLCYRWTISNFSFFVEETEEYITSLVFSLEDNDKMTWCLRVYPTGVDEKNKDYVSLYLILLSCEKGSVWAKFEVCILNAKGEKCNTERIPSFSRIQPHQPFGFEKFITRDSFLSPAQVLTPDDKFTLLCKVSVLQDSFSISGQNPRPAIKVTRCTLENDVGELWENPLFTDCSLLVAGHEFRAHKAILAARSPVFRAMFEHEMEERLTNCVEIHDLDPQVFKEMMGFIYTGKVPHLHSHSMACDLLAAADRYGLEDLMVMCEDALCRSLSVENAAHTLIVADLHSTEHLKTQALDFIIVYASEVSKTSGWMSMVESHPRLVAEAFHSLASAQRVFWALPFKQLKWSLRPTQL.

The MATH domain maps to 19–149 (KLCYRWTISN…DDKFTLLCKV (131 aa)). In terms of domain architecture, BTB spans 188–251 (TDCSLLVAGH…MMGFIYTGKV (64 aa)).

The protein belongs to the Tdpoz family.

The polypeptide is TD and POZ domain-containing protein 4 (Mus musculus (Mouse)).